A 1199-amino-acid chain; its full sequence is Major DNA-binding protein (1199 aa).

A disordered region spans residues 289–314 (SGTTTARGARRNDVNSTSKPSPSGGF). Residues 497–510 (CSLCEKHTRPVCAH) fold into a zinc finger. 2 consecutive short sequence motifs (required for filament formation) follow at residues 841–842 (FW) and 1146–1148 (FNF). A required for nuclear localization region spans residues 1172–1199 (LKRPPEDDELFDLSGIPIKHGNITMEMI).

This sequence belongs to the herpesviridae major DNA-binding protein family. Homooligomers. Forms double-helical filaments necessary for the formation of replication compartments within the host nucleus. Interacts with the origin-binding protein. Interacts with the helicase primase complex; this interaction stimulates primer synthesis activity of the helicase-primase complex. Interacts with the DNA polymerase. Interacts with the alkaline exonuclease; this interaction increases its nuclease processivity.

The protein resides in the host nucleus. In terms of biological role, plays several crucial roles in viral infection. Participates in the opening of the viral DNA origin to initiate replication by interacting with the origin-binding protein. May disrupt loops, hairpins and other secondary structures present on ssDNA to reduce and eliminate pausing of viral DNA polymerase at specific sites during elongation. Promotes viral DNA recombination by performing strand-transfer, characterized by the ability to transfer a DNA strand from a linear duplex to a complementary single-stranded DNA circle. Can also catalyze the renaturation of complementary single strands. Additionally, reorganizes the host cell nucleus, leading to the formation of prereplicative sites and replication compartments. This process is driven by the protein which can form double-helical filaments in the absence of DNA. The sequence is that of Major DNA-binding protein from Varicella-zoster virus (strain Oka vaccine) (HHV-3).